A 691-amino-acid chain; its full sequence is Threonine--tRNA ligase (691 aa).

The 66-residue stretch at methionine 1–threonine 66 folds into the TGS domain. The tract at residues aspartate 265–proline 571 is catalytic. Zn(2+)-binding residues include cysteine 370, histidine 421, and histidine 548.

This sequence belongs to the class-II aminoacyl-tRNA synthetase family. In terms of assembly, homodimer. Zn(2+) is required as a cofactor.

The protein localises to the cytoplasm. It carries out the reaction tRNA(Thr) + L-threonine + ATP = L-threonyl-tRNA(Thr) + AMP + diphosphate + H(+). In terms of biological role, catalyzes the attachment of threonine to tRNA(Thr) in a two-step reaction: L-threonine is first activated by ATP to form Thr-AMP and then transferred to the acceptor end of tRNA(Thr). Also edits incorrectly charged L-seryl-tRNA(Thr). This chain is Threonine--tRNA ligase, found in Mycolicibacterium vanbaalenii (strain DSM 7251 / JCM 13017 / BCRC 16820 / KCTC 9966 / NRRL B-24157 / PYR-1) (Mycobacterium vanbaalenii).